The primary structure comprises 1485 residues: Dicer-like protein 2 (1485 aa).

Residues 1 to 11 (MSSQDESASSS) show a composition bias toward low complexity. A disordered region spans residues 1 to 61 (MSSQDESASS…EPQPSGNGPR (61 aa)). The Helicase ATP-binding domain maps to 72 to 250 (MFQASMQQNI…MEDLESSLDS (179 aa)). ATP is bound at residue 85 to 92 (MDTGSGKT). Residues 193–196 (DEAH) carry the DEAH box motif. Positions 415–579 (KLQVLLRILR…RYENDMRELD (165 aa)) constitute a Helicase C-terminal domain. Positions 609–712 (AKGHLEHFCR…LPIRESDFVD (104 aa)) constitute a Dicer dsRNA-binding fold domain. RNase III domains lie at 988–1127 (AQEL…IEGG) and 1168–1358 (LGPL…VDSG). 3 residues coordinate Mg(2+): Glu-1208, Asp-1344, and Glu-1347. Residues 1388–1469 (HPKEELGRVA…ALEVIRVWEE (82 aa)) form the DRBM domain.

This sequence belongs to the helicase family. Dicer subfamily. Mg(2+) is required as a cofactor. Requires Mn(2+) as cofactor.

Functionally, dicer-like endonuclease involved in cleaving double-stranded RNA in the RNA interference (RNAi) pathway. Produces 21 to 25 bp dsRNAs (siRNAs) which target the selective destruction of homologous RNAs leading to sequence-specific suppression of gene expression, called post-transcriptional gene silencing (PTGS). Part of a broad host defense response against viral infection and transposons. The protein is Dicer-like protein 2 (DCL2) of Pyricularia oryzae (strain 70-15 / ATCC MYA-4617 / FGSC 8958) (Rice blast fungus).